The sequence spans 438 residues: MRYSPHSPTEVEEMLFSIGMKNKAELFADIPDRLKLGRDLELGPGLTEMELNRHLKELAGKNMNLDDYPCFLGAGAYDHYIPAALDQLLLRSEFYTAYTPYQPEISQGILQAIFEYQTMICALTGMDVANASLYDGASALAEACQMACEGSRRRKVILPATLHPEYLEVVKSYAISGKMEIIMAPEQEGIIDKEATLALLDRDSACLVIQQPNFFGCIEEIAGWEKAVHANKSLLIMVVNPISLGLLKSPGEWGADIVVGEGQPLGNPLSFGGPYLGFMACSKKYMRKMPGRLVGQSVDSNEETCYVLTLQAREQHIRREQASSNICSNEALNALAASIYLSLVGRQGLVDIAARCHQLAIYARRQMENYGLSLKYPQAFFNEFAVELDDPARINRLLLEQGIIGGYELPGALLLAFTEKRSRAEIDRLAALIGGECR.

Belongs to the GcvP family. N-terminal subunit subfamily. As to quaternary structure, the glycine cleavage system is composed of four proteins: P, T, L and H. In this organism, the P 'protein' is a heterodimer of two subunits.

The enzyme catalyses N(6)-[(R)-lipoyl]-L-lysyl-[glycine-cleavage complex H protein] + glycine + H(+) = N(6)-[(R)-S(8)-aminomethyldihydrolipoyl]-L-lysyl-[glycine-cleavage complex H protein] + CO2. In terms of biological role, the glycine cleavage system catalyzes the degradation of glycine. The P protein binds the alpha-amino group of glycine through its pyridoxal phosphate cofactor; CO(2) is released and the remaining methylamine moiety is then transferred to the lipoamide cofactor of the H protein. This Syntrophomonas wolfei subsp. wolfei (strain DSM 2245B / Goettingen) protein is Probable glycine dehydrogenase (decarboxylating) subunit 1.